The sequence spans 178 residues: Large ribosomal subunit protein uL6 (178 aa).

Belongs to the universal ribosomal protein uL6 family. As to quaternary structure, part of the 50S ribosomal subunit.

Functionally, this protein binds to the 23S rRNA, and is important in its secondary structure. It is located near the subunit interface in the base of the L7/L12 stalk, and near the tRNA binding site of the peptidyltransferase center. The chain is Large ribosomal subunit protein uL6 from Corynebacterium aurimucosum (strain ATCC 700975 / DSM 44827 / CIP 107346 / CN-1) (Corynebacterium nigricans).